A 294-amino-acid polypeptide reads, in one-letter code: Pyridoxal 5'-phosphate synthase subunit PdxS (294 aa).

Aspartate 24 contacts D-ribose 5-phosphate. Lysine 81 acts as the Schiff-base intermediate with D-ribose 5-phosphate in catalysis. Glycine 153 lines the D-ribose 5-phosphate pocket. Arginine 165 is a D-glyceraldehyde 3-phosphate binding site. D-ribose 5-phosphate-binding positions include glycine 214 and 235–236; that span reads GS.

It belongs to the PdxS/SNZ family. In the presence of PdxT, forms a dodecamer of heterodimers.

The enzyme catalyses aldehydo-D-ribose 5-phosphate + D-glyceraldehyde 3-phosphate + L-glutamine = pyridoxal 5'-phosphate + L-glutamate + phosphate + 3 H2O + H(+). It functions in the pathway cofactor biosynthesis; pyridoxal 5'-phosphate biosynthesis. Functionally, catalyzes the formation of pyridoxal 5'-phosphate from ribose 5-phosphate (RBP), glyceraldehyde 3-phosphate (G3P) and ammonia. The ammonia is provided by the PdxT subunit. Can also use ribulose 5-phosphate and dihydroxyacetone phosphate as substrates, resulting from enzyme-catalyzed isomerization of RBP and G3P, respectively. In Bacillus licheniformis (strain ATCC 14580 / DSM 13 / JCM 2505 / CCUG 7422 / NBRC 12200 / NCIMB 9375 / NCTC 10341 / NRRL NRS-1264 / Gibson 46), this protein is Pyridoxal 5'-phosphate synthase subunit PdxS.